The sequence spans 273 residues: Rhamnulose-1-phosphate aldolase (273 aa).

The active site involves glutamate 117. Zn(2+)-binding residues include histidine 140, histidine 142, and histidine 211.

This sequence belongs to the aldolase class II family. RhaD subfamily. Zn(2+) is required as a cofactor.

Its subcellular location is the cytoplasm. It catalyses the reaction L-rhamnulose 1-phosphate = (S)-lactaldehyde + dihydroxyacetone phosphate. It functions in the pathway carbohydrate degradation; L-rhamnose degradation; glycerone phosphate from L-rhamnose: step 3/3. Functionally, catalyzes the reversible cleavage of L-rhamnulose-1-phosphate to dihydroxyacetone phosphate (DHAP) and L-lactaldehyde. In Listeria monocytogenes serovar 1/2a (strain ATCC BAA-679 / EGD-e), this protein is Rhamnulose-1-phosphate aldolase.